A 266-amino-acid polypeptide reads, in one-letter code: Type III pantothenate kinase (266 aa).

15 to 22 (EIGNSSTS) serves as a coordination point for ATP. Substrate contacts are provided by residues Y105 and 112-115 (GADR). D114 (proton acceptor) is an active-site residue. D135 is a K(+) binding site. T138 provides a ligand contact to ATP. T191 lines the substrate pocket.

The protein belongs to the type III pantothenate kinase family. As to quaternary structure, homodimer. NH4(+) is required as a cofactor. Requires K(+) as cofactor.

It is found in the cytoplasm. It catalyses the reaction (R)-pantothenate + ATP = (R)-4'-phosphopantothenate + ADP + H(+). It participates in cofactor biosynthesis; coenzyme A biosynthesis; CoA from (R)-pantothenate: step 1/5. Its function is as follows. Catalyzes the phosphorylation of pantothenate (Pan), the first step in CoA biosynthesis. The protein is Type III pantothenate kinase of Chlorobium chlorochromatii (strain CaD3).